We begin with the raw amino-acid sequence, 630 residues long: UvrABC system protein C (630 aa).

The GIY-YIG domain occupies 18 to 97 (TQSGVYLMKN…IKKHRPKYNI (80 aa)). The UVR domain maps to 207 to 242 (KKVIKSMTEKMMGAADEEKFEVAARLRDSIEAIKAI).

The protein belongs to the UvrC family. In terms of assembly, interacts with UvrB in an incision complex.

The protein localises to the cytoplasm. Functionally, the UvrABC repair system catalyzes the recognition and processing of DNA lesions. UvrC both incises the 5' and 3' sides of the lesion. The N-terminal half is responsible for the 3' incision and the C-terminal half is responsible for the 5' incision. The protein is UvrABC system protein C of Bdellovibrio bacteriovorus (strain ATCC 15356 / DSM 50701 / NCIMB 9529 / HD100).